The chain runs to 169 residues: MTINIEYEAEEKLDLDYEKIITDVVNEAVDYEKCPYEAEVNVTIVDSESIHEINKEYRNIDSPTDVLSFPGVNYVTPSDFDAIEDELENNAEDYFNPDTGELLLGDIVLCVQKIKEQADKYGHSEKRELAFLTAHSMMHLFGYDHMTPEESAVMEAKQNEVLERLGITR.

3 residues coordinate Zn(2+): histidine 135, histidine 139, and histidine 145.

It belongs to the endoribonuclease YbeY family. Zn(2+) is required as a cofactor.

The protein resides in the cytoplasm. Functionally, single strand-specific metallo-endoribonuclease involved in late-stage 70S ribosome quality control and in maturation of the 3' terminus of the 16S rRNA. This is Endoribonuclease YbeY from Lachnospira eligens (strain ATCC 27750 / DSM 3376 / VPI C15-48 / C15-B4) (Eubacterium eligens).